We begin with the raw amino-acid sequence, 501 residues long: UDP-N-acetylmuramate--L-alanine ligase (501 aa).

130–136 (GTHGKTS) is a binding site for ATP.

It belongs to the MurCDEF family.

The protein localises to the cytoplasm. It catalyses the reaction UDP-N-acetyl-alpha-D-muramate + L-alanine + ATP = UDP-N-acetyl-alpha-D-muramoyl-L-alanine + ADP + phosphate + H(+). It functions in the pathway cell wall biogenesis; peptidoglycan biosynthesis. Functionally, cell wall formation. In Nocardia farcinica (strain IFM 10152), this protein is UDP-N-acetylmuramate--L-alanine ligase.